Here is a 201-residue protein sequence, read N- to C-terminus: Imidazoleglycerol-phosphate dehydratase (201 aa).

The protein belongs to the imidazoleglycerol-phosphate dehydratase family.

It localises to the cytoplasm. It carries out the reaction D-erythro-1-(imidazol-4-yl)glycerol 3-phosphate = 3-(imidazol-4-yl)-2-oxopropyl phosphate + H2O. The protein operates within amino-acid biosynthesis; L-histidine biosynthesis; L-histidine from 5-phospho-alpha-D-ribose 1-diphosphate: step 6/9. In Synechococcus sp. (strain CC9902), this protein is Imidazoleglycerol-phosphate dehydratase.